The primary structure comprises 383 residues: Na(+)/H(+) antiporter NhaA (383 aa).

11 helical membrane passes run 19-39 (AGGV…NSPL), 56-76 (VLHG…GLEI), 92-112 (ILPG…FLAL), 122-142 (GWAV…ALLG), 151-171 (IFLT…IALF), 174-194 (AKLS…LAAL), 212-232 (LWGA…ALAL), 255-275 (VGYG…FAGL), 292-312 (LLFG…WLGF), 326-346 (GVAV…ALAF), and 356-376 (VKVG…LVLL).

Belongs to the NhaA Na(+)/H(+) (TC 2.A.33) antiporter family.

The protein localises to the cell inner membrane. It catalyses the reaction Na(+)(in) + 2 H(+)(out) = Na(+)(out) + 2 H(+)(in). Functionally, na(+)/H(+) antiporter that extrudes sodium in exchange for external protons. This Paramagnetospirillum magneticum (strain ATCC 700264 / AMB-1) (Magnetospirillum magneticum) protein is Na(+)/H(+) antiporter NhaA.